We begin with the raw amino-acid sequence, 971 residues long: U2 snRNP component HSH155 (971 aa).

Disordered regions lie at residues 1–22 and 54–118; these read MSHP…LGGQ and TRTV…AVKE. A compositionally biased stretch (polar residues) spans 8 to 22; sequence VNANNSDKSHQLGGQ. Positions 54 to 75 are enriched in basic and acidic residues; that stretch reads TRTVQNREDSYHKRRFDMKFEP. Over residues 78-90 the composition is skewed to polar residues; that stretch reads DTQTVTSSENTQD. HEAT repeat units follow at residues 199–237, 273–310, 350–387, 513–550, 596–633, 680–717, 722–759, 792–829, and 832–870; these read MIFN…DLTK, AGLK…ALGV, NHLT…NSYP, LGCS…LLGT, PFLA…VIKN, PPIN…LAPT, KEWM…AIGP, CGPY…YIGN, and KDYI…NCSG.

Belongs to the SF3B1 family. Belongs to the CWC complex (or CEF1-associated complex), a spliceosome sub-complex reminiscent of a late-stage spliceosome composed of the U2, U5 and U6 snRNAs and at least BUD13, BUD31, BRR2, CDC40, CEF1, CLF1, CUS1, CWC2, CWC15, CWC21, CWC22, CWC23, CWC24, CWC25, CWC27, ECM2, HSH155, IST3, ISY1, LEA1, MSL1, NTC20, PRP8, PRP9, PRP11, PRP19, PRP21, PRP22, PRP45, PRP46, SLU7, SMB1, SMD1, SMD2, SMD3, SMX2, SMX3, SNT309, SNU114, SPP2, SYF1, SYF2, RSE1 and YJU2. Interacts with RDS3.

The protein resides in the nucleus. In terms of biological role, contacts pre-mRNA on both sides of the branch site early in spliceosome assembly. This is U2 snRNP component HSH155 (HSH155) from Saccharomyces cerevisiae (strain ATCC 204508 / S288c) (Baker's yeast).